We begin with the raw amino-acid sequence, 859 residues long: DNA mismatch repair protein MutS (859 aa).

Residue 614–621 participates in ATP binding; the sequence is GPNMGGKS.

The protein belongs to the DNA mismatch repair MutS family.

This protein is involved in the repair of mismatches in DNA. It is possible that it carries out the mismatch recognition step. This protein has a weak ATPase activity. The polypeptide is DNA mismatch repair protein MutS (Histophilus somni (strain 2336) (Haemophilus somnus)).